The sequence spans 877 residues: Alanine--tRNA ligase (877 aa).

Residues H562, H566, C664, and H668 each contribute to the Zn(2+) site.

The protein belongs to the class-II aminoacyl-tRNA synthetase family. Requires Zn(2+) as cofactor.

The protein localises to the cytoplasm. The enzyme catalyses tRNA(Ala) + L-alanine + ATP = L-alanyl-tRNA(Ala) + AMP + diphosphate. In terms of biological role, catalyzes the attachment of alanine to tRNA(Ala) in a two-step reaction: alanine is first activated by ATP to form Ala-AMP and then transferred to the acceptor end of tRNA(Ala). Also edits incorrectly charged Ser-tRNA(Ala) and Gly-tRNA(Ala) via its editing domain. The polypeptide is Alanine--tRNA ligase (Synechocystis sp. (strain ATCC 27184 / PCC 6803 / Kazusa)).